Reading from the N-terminus, the 455-residue chain is Beta-cyclopiazonate dehydrogenase (455 aa).

The N-terminal stretch at 1 to 20 (MATRIASFIGISTVASLALA) is a signal peptide.

It belongs to the beta-cyclopiazonate dehydrogenase family. It depends on FAD as a cofactor.

The enzyme catalyses beta-cyclopiazonate + A = alpha-cyclopiazonate + AH2. Beta-cyclopiazonate dehydrogenase involved in the synthesis of the fungal neurotoxin alpha-cyclopiazonic acid (CPA). CpaO carries out the dehydrogenation of beta-CPA to yield an unstable enimine product, which is captured by intramolecular cyclization to create the pentacyclic fused scaffold of alpha-cyclopiazonate. The polypeptide is Beta-cyclopiazonate dehydrogenase (Aspergillus flavus (strain ATCC 200026 / FGSC A1120 / IAM 13836 / NRRL 3357 / JCM 12722 / SRRC 167)).